The chain runs to 655 residues: Alpha-amylase (655 aa).

Glu123 acts as the Nucleophile in catalysis. Asp214 functions as the Proton donor in the catalytic mechanism.

It belongs to the glycosyl hydrolase 57 family.

The enzyme catalyses Endohydrolysis of (1-&gt;4)-alpha-D-glucosidic linkages in polysaccharides containing three or more (1-&gt;4)-alpha-linked D-glucose units.. The polypeptide is Alpha-amylase (amyA) (Pyrococcus abyssi (strain GE5 / Orsay)).